Here is a 390-residue protein sequence, read N- to C-terminus: E3 ubiquitin-protein ligase At4g11680 (390 aa).

A compositionally biased stretch (low complexity) spans 1 to 19 (MSSSSSTTTNTTTESDSSS). Residues 1–39 (MSSSSSTTTNTTTESDSSSLPTHIGRSNSDGIIDTTPFL) form a disordered region. 5 helical membrane passes run 109-129 (VVFLDILWNLAFVAIGVAVLI), 142-162 (VWVVGYGIQCWLHMACVCVEY), 212-232 (MFSFIWWIIGFYWVSAGGQTL), 244-264 (IIFLGFDVFFVVFCVALACVI), and 265-285 (GLAVCCCLPCIIAILYAVADQ). The RING-type; atypical zinc-finger motif lies at 338–379 (CCICLCEYEDGVELRELPCNHHFHCTCIDKWLHINSRCPLCK).

It localises to the membrane. It catalyses the reaction S-ubiquitinyl-[E2 ubiquitin-conjugating enzyme]-L-cysteine + [acceptor protein]-L-lysine = [E2 ubiquitin-conjugating enzyme]-L-cysteine + N(6)-ubiquitinyl-[acceptor protein]-L-lysine.. Its pathway is protein modification; protein ubiquitination. Mediates E2-dependent protein ubiquitination in vitro. In Arabidopsis thaliana (Mouse-ear cress), this protein is E3 ubiquitin-protein ligase At4g11680.